The following is a 400-amino-acid chain: NAD-dependent protein deacetylase sirtuin-7 (400 aa).

The disordered stretch occupies residues 1–27; the sequence is MAAGGLSRSERKAAERVRRLREEQQRE. The span at 8–27 shows a compositional bias: basic and acidic residues; it reads RSERKAAERVRRLREEQQRE. In terms of domain architecture, Deacetylase sirtuin-type spans 82-329; that stretch reads PEELRGKVRE…RLLMAELGLE (248 aa). Residues 107–126 and 167–170 each bind NAD(+); these read GAGI…NGVW and QNCD. The active-site Proton acceptor is His-187. Cys-195, Cys-198, Cys-225, and Cys-228 together coordinate Zn(2+). NAD(+) is bound by residues 268–270, 297–299, and Cys-315; these read GSS and NLQ. Positions 354–380 are disordered; sequence SHSRKSLCRSREEAPPGDRGAPLSSAP. The residue at position 388 (Arg-388) is an Asymmetric dimethylarginine; alternate. Arg-388 bears the Omega-N-methylarginine; alternate mark.

This sequence belongs to the sirtuin family. Class IV subfamily. As to quaternary structure, interacts with UBTF and the RNA polymerase I complex. Interacts with components of the B-WICH complex, such as MYBBP1A, SMARCA5/SNF2H and BAZ1B/WSTF. Interacts with ELK4, leading to stabilization at target promoters for H3K18Ac deacetylation. Interacts with histone H2A and/or histone H2B. Interacts with DNMT1. Interacts with SIRT1. It depends on Zn(2+) as a cofactor. Post-translationally, phosphorylated during mitosis. In terms of processing, methylation at Arg-388 by PRMT6 inhibits the H3K18Ac histone deacetylase activity, promoting mitochondria biogenesis and maintaining mitochondria respiration. Ubiquitinated via 'Lys-63'-linked ubiquitin chains. Deubiquitinated by USP7, inhibiting the H3K18Ac histone deacetylase activity and regulating gluconeogenesis. Ubiquitinated by E3 ubiquitin-protein ligase complex containing FBXO7; leading to proteasomal degradation.

Its subcellular location is the nucleus. The protein resides in the nucleolus. It localises to the nucleoplasm. The protein localises to the chromosome. It is found in the cytoplasm. The enzyme catalyses N(6)-acetyl-L-lysyl-[protein] + NAD(+) + H2O = 2''-O-acetyl-ADP-D-ribose + nicotinamide + L-lysyl-[protein]. It carries out the reaction N(6)-glutaryl-L-lysyl-[protein] + NAD(+) + H2O = 2''-O-glutaryl-ADP-D-ribose + nicotinamide + L-lysyl-[protein]. It catalyses the reaction N(6)-succinyl-L-lysyl-[protein] + NAD(+) + H2O = 2''-O-succinyl-ADP-D-ribose + nicotinamide + L-lysyl-[protein]. The catalysed reaction is N(6)-propanoyl-L-lysyl-[protein] + NAD(+) + H2O = 3''-O-propanoyl-ADP-D-ribose + nicotinamide + L-lysyl-[protein]. The enzyme catalyses N(6)-decanoyl-L-lysyl-[protein] + NAD(+) + H2O = 2''-O-decanoyl-ADP-D-ribose + nicotinamide + L-lysyl-[protein]. NAD-dependent protein-lysine deacetylase and deacylase activities are activated by nucleic acids. Histone deacetylase activity is activated by DNA and nucleosomes. Protein-lysine deacylase activity is activated by RNA. H3K18Ac histone deacetylase activity is inhibited by methylation at Arg-388. H3K18Ac histone deacetylase activity is inhibited by deubiquitination by USP7. NAD-dependent protein-lysine deacylase that can act both as a deacetylase or deacylase (desuccinylase, depropionylase, deglutarylase and dedecanoylase), depending on the context. Specifically mediates deacetylation of histone H3 at 'Lys-18' (H3K18Ac). In contrast to other histone deacetylases, displays strong preference for a specific histone mark, H3K18Ac, directly linked to control of gene expression. H3K18Ac is mainly present around the transcription start site of genes and has been linked to activation of nuclear hormone receptors; SIRT7 thereby acts as a transcription repressor. Moreover, H3K18 hypoacetylation has been reported as a marker of malignancy in various cancers and seems to maintain the transformed phenotype of cancer cells. Also able to mediate deacetylation of histone H3 at 'Lys-36' (H3K36Ac) in the context of nucleosomes. Also mediates deacetylation of non-histone proteins, such as ATM, CDK9, DDX21, DDB1, FBL, FKBP5/FKBP51, GABPB1, RAN, RRP9/U3-55K and POLR1E/PAF53. Enriched in nucleolus where it stimulates transcription activity of the RNA polymerase I complex. Acts by mediating the deacetylation of the RNA polymerase I subunit POLR1E/PAF53, thereby promoting the association of RNA polymerase I with the rDNA promoter region and coding region. In response to metabolic stress, SIRT7 is released from nucleoli leading to hyperacetylation of POLR1E/PAF53 and decreased RNA polymerase I transcription. Required to restore the transcription of ribosomal RNA (rRNA) at the exit from mitosis. Promotes pre-ribosomal RNA (pre-rRNA) cleavage at the 5'-terminal processing site by mediating deacetylation of RRP9/U3-55K, a core subunit of the U3 snoRNP complex. Mediates 'Lys-37' deacetylation of Ran, thereby regulating the nuclear export of NF-kappa-B subunit RELA/p65. Acts as a regulator of DNA damage repair by mediating deacetylation of ATM during the late stages of DNA damage response, promoting ATM dephosphorylation and deactivation. Suppresses the activity of the DCX (DDB1-CUL4-X-box) E3 ubiquitin-protein ligase complexes by mediating deacetylation of DDB1, which prevents the interaction between DDB1 and CUL4 (CUL4A or CUL4B). Activates RNA polymerase II transcription by mediating deacetylation of CDK9, thereby promoting 'Ser-2' phosphorylation of the C-terminal domain (CTD) of RNA polymerase II. Deacetylates FBL, promoting histone-glutamine methyltransferase activity of FBL. Acts as a regulator of mitochondrial function by catalyzing deacetylation of GABPB1. Regulates Akt/AKT1 activity by mediating deacetylation of FKBP5/FKBP51. Required to prevent R-loop-associated DNA damage and transcription-associated genomic instability by mediating deacetylation and subsequent activation of DDX21, thereby overcoming R-loop-mediated stalling of RNA polymerases. In addition to protein deacetylase activity, also acts as a protein-lysine deacylase. Acts as a protein depropionylase by mediating depropionylation of Osterix (SP7), thereby regulating bone formation by osteoblasts. Acts as a histone deglutarylase by mediating deglutarylation of histone H4 on 'Lys-91' (H4K91glu); a mark that destabilizes nucleosomes by promoting dissociation of the H2A-H2B dimers from nucleosomes. Acts as a histone desuccinylase: in response to DNA damage, recruited to DNA double-strand breaks (DSBs) and catalyzes desuccinylation of histone H3 on 'Lys-122' (H3K122succ), thereby promoting chromatin condensation and DSB repair. Also promotes DSB repair by promoting H3K18Ac deacetylation, regulating non-homologous end joining (NHEJ). Along with its role in DNA repair, required for chromosome synapsis during prophase I of female meiosis by catalyzing H3K18Ac deacetylation. Involved in transcriptional repression of LINE-1 retrotransposon via H3K18Ac deacetylation, and promotes their association with the nuclear lamina. Required to stabilize ribosomal DNA (rDNA) heterochromatin and prevent cellular senescence induced by rDNA instability. Acts as a negative regulator of SIRT1 by preventing autodeacetylation of SIRT1, restricting SIRT1 deacetylase activity. This is NAD-dependent protein deacetylase sirtuin-7 from Homo sapiens (Human).